Consider the following 301-residue polypeptide: Homoserine O-acetyltransferase (301 aa).

The active-site Acyl-thioester intermediate is Cys142. Residues Lys163 and Ser192 each contribute to the substrate site. His235 functions as the Proton acceptor in the catalytic mechanism. The active site involves Glu237. Arg249 is a binding site for substrate.

It belongs to the MetA family.

Its subcellular location is the cytoplasm. It catalyses the reaction L-homoserine + acetyl-CoA = O-acetyl-L-homoserine + CoA. The protein operates within amino-acid biosynthesis; L-methionine biosynthesis via de novo pathway; O-acetyl-L-homoserine from L-homoserine: step 1/1. Transfers an acetyl group from acetyl-CoA to L-homoserine, forming acetyl-L-homoserine. In Bacillus cereus (strain B4264), this protein is Homoserine O-acetyltransferase.